Consider the following 102-residue polypeptide: Scorpine-like-2 (102 aa).

A signal peptide spans 1–19 (MQTQCTVLQLLVLVALCSC). One can recognise a BetaSPN-type CS-alpha/beta domain in the interval 63 to 102 (QQLCLIVDTVQWCNKSCLAAENKEGYCHGTKCKCGIKVSY). Disulfide bonds link C66/C89, C75/C94, and C79/C96.

Belongs to the long chain scorpion toxin family. Class 3 subfamily. As to expression, expressed by the venom gland.

Its subcellular location is the secreted. In terms of biological role, inhibits voltage-gated potassium channels. This is Scorpine-like-2 from Urodacus yaschenkoi (Inland robust scorpion).